We begin with the raw amino-acid sequence, 216 residues long: RNA chaperone ProQ (216 aa).

The segment covering 105–115 has biased composition (basic and acidic residues); the sequence is ESKAKVAEKRK. A disordered region spans residues 105–159; that stretch reads ESKAKVAEKRKAQNAAKPGAKKSYKSKTVPAFKSSPKGTNQDNVKPKAKLPPPEK.

Belongs to the ProQ family.

It is found in the cytoplasm. RNA chaperone with significant RNA binding, RNA strand exchange and RNA duplexing activities. The protein is RNA chaperone ProQ of Pseudoalteromonas atlantica (strain T6c / ATCC BAA-1087).